Consider the following 703-residue polypeptide: Leucine zipper putative tumor suppressor 3 (703 aa).

Disordered regions lie at residues 1–22 (MAPA…PHLF), 40–190 (RADP…SEPL), and 204–347 (FHSM…PPSP). Residues 96–107 (GSFPGPRSSGSG) show a composition bias toward low complexity. The span at 109–124 (NRERPGPGRYPSEDKV) shows a compositional bias: basic and acidic residues. Positions 205 to 218 (HSMQNLCPPQTNGT) are enriched in polar residues. The span at 251–268 (DSGRNSLTSLPTYSSSYS) shows a compositional bias: low complexity. Residues 290–299 (SSGGGGGGSG) show a composition bias toward gly residues. The segment covering 304–324 (GTSDSGRASSKSGSSSSMGRS) has biased composition (low complexity). Residues 325–336 (GHLGSGEGGNGG) are compositionally biased toward gly residues. Residues serine 346 and serine 348 each carry the phosphoserine modification. Coiled coils occupy residues 348–526 (SALI…SLRD) and 600–669 (TRAL…RLRE). Positions 665-703 (RRLRERGAAGGSRTPTPQHGEEEKAWTPSRLERIESTEI) are disordered. Residues 683–703 (HGEEEKAWTPSRLERIESTEI) are compositionally biased toward basic and acidic residues.

The protein belongs to the LZTS3 family. In terms of assembly, interacts (via C-terminus) with SHANK3 (via PDZ domain). Interacts (via coiled coil) with SIPA1L1. Can form homooligomers. As to expression, detected in brain, with highest expression in brain cortex, caudate putamen, cerebellum and hippocampus. Detected in neuropil (at protein level). Detected in brain and kidney.

Its subcellular location is the synapse. The protein localises to the postsynaptic density. It localises to the cell projection. The protein resides in the dendritic spine. It is found in the dendrite. Its subcellular location is the cytoplasm. The protein localises to the cytoskeleton. In terms of biological role, may be involved in promoting the maturation of dendritic spines, probably via regulating SIPA1L1 levels at the postsynaptic density of synapses. The chain is Leucine zipper putative tumor suppressor 3 from Rattus norvegicus (Rat).